The primary structure comprises 199 residues: Small ribosomal subunit protein uS4 (199 aa).

In terms of domain architecture, S4 RNA-binding spans 91–154; it reads SRLDNLVYRM…RGLQLIKDAL (64 aa).

This sequence belongs to the universal ribosomal protein uS4 family. In terms of assembly, part of the 30S ribosomal subunit. Contacts protein S5. The interaction surface between S4 and S5 is involved in control of translational fidelity.

One of the primary rRNA binding proteins, it binds directly to 16S rRNA where it nucleates assembly of the body of the 30S subunit. Functionally, with S5 and S12 plays an important role in translational accuracy. This chain is Small ribosomal subunit protein uS4, found in Brevibacillus brevis (strain 47 / JCM 6285 / NBRC 100599).